The following is a 242-amino-acid chain: N-acetylmuramate alpha-1-phosphate uridylyltransferase (242 aa).

UTP contacts are provided by residues 16–18 (GTR) and Lys-28. Asn-113 contacts substrate. Asp-115 serves as a coordination point for Mg(2+). Residue Asp-158 coordinates substrate.

It belongs to the nucleotidyltransferase MurU family. In terms of assembly, monomer. The cofactor is Mg(2+).

The catalysed reaction is N-acetyl-alpha-D-muramate 1-phosphate + UDP + H(+) = UDP-N-acetyl-alpha-D-muramate + phosphate. It functions in the pathway cell wall biogenesis; peptidoglycan recycling. In terms of biological role, catalyzes the formation of UDP-N-acetylmuramate (UDP-MurNAc), a crucial precursor of the bacterial peptidoglycan cell wall, from UTP and MurNAc-alpha-1P. Is likely involved in peptidoglycan recycling as part of a cell wall recycling pathway that bypasses de novo biosynthesis of the peptidoglycan precursor UDP-MurNAc. Is able to complement the fosfomycin sensitivity phenotype of a P.putida mutant lacking murU. The protein is N-acetylmuramate alpha-1-phosphate uridylyltransferase of Caulobacter vibrioides (strain ATCC 19089 / CIP 103742 / CB 15) (Caulobacter crescentus).